Here is a 238-residue protein sequence, read N- to C-terminus: MVHLRRTTAPYWWPIPRKIGGVWVVRSSPGPHSLAYSLPLAIIIRDVLKYAKTMREARYIISRGYVKIDGVIRKDYKFPVGLMDVVEIVPTGEIYRVVPDEKKYYALIPISSEEATLKLLRVEGKTAVKGGKLQLHFHDGRNLIVSQDVGRHIKTFDTVLYDLQNKNIKMHIPFKLGAYAVVTRGGNVGFSGKLYEIVWTLKRRQSVVALKRNEEVRRTILDYIMITGSEAPVIKISP.

Residues 38–110 enclose the S4 RNA-binding domain; it reads LPLAIIIRDV…EKKYYALIPI (73 aa).

Belongs to the eukaryotic ribosomal protein eS4 family.

In Pyrobaculum islandicum (strain DSM 4184 / JCM 9189 / GEO3), this protein is Small ribosomal subunit protein eS4.